A 417-amino-acid polypeptide reads, in one-letter code: F-box protein At3g07870 (417 aa).

Positions 22–68 constitute an F-box domain; it reads GGGLESLPEDIIADIFSRLPISSIARLMFVCRSWRSVLTQHGRLSSS.

This Arabidopsis thaliana (Mouse-ear cress) protein is F-box protein At3g07870.